The chain runs to 703 residues: Elongation factor G 2 (703 aa).

Residues 8 to 291 form the tr-type G domain; the sequence is ELYRNIGIVA…AVIDYLPAPS (284 aa). Residues 17 to 24, 89 to 93, and 143 to 146 contribute to the GTP site; these read AHVDAGKT, DTPGH, and NKMD.

This sequence belongs to the TRAFAC class translation factor GTPase superfamily. Classic translation factor GTPase family. EF-G/EF-2 subfamily.

It localises to the cytoplasm. Its function is as follows. Catalyzes the GTP-dependent ribosomal translocation step during translation elongation. During this step, the ribosome changes from the pre-translocational (PRE) to the post-translocational (POST) state as the newly formed A-site-bound peptidyl-tRNA and P-site-bound deacylated tRNA move to the P and E sites, respectively. Catalyzes the coordinated movement of the two tRNA molecules, the mRNA and conformational changes in the ribosome. This chain is Elongation factor G 2 (fusB), found in Pseudomonas putida (strain ATCC 47054 / DSM 6125 / CFBP 8728 / NCIMB 11950 / KT2440).